The following is a 439-amino-acid chain: Homogentisate 1,2-dioxygenase (439 aa).

His-289 serves as the catalytic Proton acceptor. Residues His-332 and Glu-338 each coordinate Fe cation. The homogentisate site is built by Tyr-347 and His-368. His-368 contacts Fe cation.

This sequence belongs to the homogentisate dioxygenase family. As to quaternary structure, hexamer; dimer of trimers. The cofactor is Fe cation.

The catalysed reaction is homogentisate + O2 = 4-maleylacetoacetate + H(+). Its pathway is amino-acid degradation; L-phenylalanine degradation; acetoacetate and fumarate from L-phenylalanine: step 4/6. Its function is as follows. Involved in the catabolism of homogentisate (2,5-dihydroxyphenylacetate or 2,5-OH-PhAc), a central intermediate in the degradation of phenylalanine and tyrosine. Catalyzes the oxidative ring cleavage of the aromatic ring of homogentisate to yield maleylacetoacetate. This chain is Homogentisate 1,2-dioxygenase, found in Xanthomonas euvesicatoria pv. vesicatoria (strain 85-10) (Xanthomonas campestris pv. vesicatoria).